Here is a 380-residue protein sequence, read N- to C-terminus: Erythronate-4-phosphate dehydrogenase (380 aa).

Substrate contacts are provided by S45 and T66. NAD(+) contacts are provided by residues D146, T174, 205–207 (ASR), and D231. R207 is a catalytic residue. E236 is an active-site residue. H253 (proton donor) is an active-site residue. Residue G256 coordinates NAD(+). Y257 contacts substrate.

The protein belongs to the D-isomer specific 2-hydroxyacid dehydrogenase family. PdxB subfamily. In terms of assembly, homodimer.

The protein resides in the cytoplasm. It carries out the reaction 4-phospho-D-erythronate + NAD(+) = (R)-3-hydroxy-2-oxo-4-phosphooxybutanoate + NADH + H(+). It functions in the pathway cofactor biosynthesis; pyridoxine 5'-phosphate biosynthesis; pyridoxine 5'-phosphate from D-erythrose 4-phosphate: step 2/5. Functionally, catalyzes the oxidation of erythronate-4-phosphate to 3-hydroxy-2-oxo-4-phosphonooxybutanoate. The polypeptide is Erythronate-4-phosphate dehydrogenase (Pseudomonas putida (strain W619)).